A 752-amino-acid chain; its full sequence is Zinc finger BED domain-containing protein RICESLEEPER 3 (752 aa).

The BED-type zinc finger occupies 106 to 166; it reads RKKSVVWEHF…ASCPMLKNED (61 aa). The Zn(2+) site is built by C129, C132, H153, and C159. The interval 647–733 is HATC (Hobo-Ac-Tam3) domain; that stretch reads ELEQYLEEAL…EALFCAKDWL (87 aa).

In terms of assembly, homodimer.

The protein resides in the nucleus. In terms of biological role, transposase-like protein that is essential for plant growth and development. May regulate global gene expression by recruiting other cellular factors. This Oryza sativa subsp. japonica (Rice) protein is Zinc finger BED domain-containing protein RICESLEEPER 3.